A 669-amino-acid polypeptide reads, in one-letter code: Cell surface receptor daf-1 (669 aa).

The signal sequence occupies residues 1 to 19; sequence MRIRHVVFCLLALVYGAET. Residues 20-170 are Extracellular-facing; that stretch reads SDDDLDERTN…APGPQQSSTW (151 aa). Asparagine 49, asparagine 79, asparagine 133, and asparagine 154 each carry an N-linked (GlcNAc...) asparagine glycan. The helical transmembrane segment at 171–191 threads the bilayer; the sequence is LILTILALLTFIVLLGIAIFL. The Cytoplasmic segment spans residues 192–669; that stretch reads TRKSWEAKFD…NDDSSRPLLG (478 aa). The GS domain maps to 262 to 292; the sequence is NNMKDMLDVLEETSGSGMGPTTLHKLTIGGQ. In terms of domain architecture, Protein kinase spans 293–593; the sequence is IRLTGRVGSG…KRMDERQQLL (301 aa). Residues 299-307 and lysine 320 each bind ATP; that span reads VGSGRFGNV. Aspartate 423 acts as the Proton acceptor in catalysis. Basic and acidic residues-rich tracts occupy residues 611–624 and 633–650; these read DRKI…KDES and VQKE…RETA. The disordered stretch occupies residues 611 to 669; the sequence is DRKILGPQKPKDESPANGAPRIVQKEIDREDEQENWRETAKTPNGHISSNDDSSRPLLG. Residues 651–661 are compositionally biased toward polar residues; the sequence is KTPNGHISSND.

It belongs to the protein kinase superfamily. TKL Ser/Thr protein kinase family. TGFB receptor subfamily. May interact with daf-4 to regulate dauer larva development. In terms of tissue distribution, head and ventral nerve cord from embryos to adults. Expressed in many sensory neurons. Subset of head neurons show coexpression with daf-4 when dauer/nondauer decision is made. Also expressed in non-neuronal cells: membraneous sheath surrounding the distal end of the intestine and in the distal tip cell of the gonad.

It is found in the membrane. The enzyme catalyses L-threonyl-[receptor-protein] + ATP = O-phospho-L-threonyl-[receptor-protein] + ADP + H(+). It catalyses the reaction L-seryl-[receptor-protein] + ATP = O-phospho-L-seryl-[receptor-protein] + ADP + H(+). Functionally, probably involved in a TGF-beta pathway. May be a receptor for TGF-beta-like ligand daf-7. Controls the decision of whether or not larvae enter a developmentally arrested state, known as dauer, in response to environmental conditions. Involved in regulating entry into quiescence triggered by satiety. Involved in sensitivity to CO2 levels. In AWC neurons, acts to promote expression of srsx-3, a member of the GPCR family. This chain is Cell surface receptor daf-1 (daf-1), found in Caenorhabditis elegans.